Consider the following 393-residue polypeptide: tRNA(Met) cytidine acetate ligase (393 aa).

The ATP site is built by G81, N142, and R167.

Belongs to the TmcAL family.

It is found in the cytoplasm. It carries out the reaction cytidine(34) in elongator tRNA(Met) + acetate + ATP = N(4)-acetylcytidine(34) in elongator tRNA(Met) + AMP + diphosphate. Catalyzes the formation of N(4)-acetylcytidine (ac(4)C) at the wobble position of elongator tRNA(Met), using acetate and ATP as substrates. First activates an acetate ion to form acetyladenylate (Ac-AMP) and then transfers the acetyl group to tRNA to form ac(4)C34. The polypeptide is tRNA(Met) cytidine acetate ligase (Bacillus cereus (strain AH187)).